The sequence spans 91 residues: Small ribosomal subunit protein uS19 (91 aa).

It belongs to the universal ribosomal protein uS19 family.

Protein S19 forms a complex with S13 that binds strongly to the 16S ribosomal RNA. The protein is Small ribosomal subunit protein uS19 of Pseudomonas syringae pv. tomato (strain ATCC BAA-871 / DC3000).